Consider the following 225-residue polypeptide: Ribosome maturation factor RimP (225 aa).

Belongs to the RimP family.

The protein resides in the cytoplasm. Required for maturation of 30S ribosomal subunits. The chain is Ribosome maturation factor RimP from Rhodospirillum rubrum (strain ATCC 11170 / ATH 1.1.1 / DSM 467 / LMG 4362 / NCIMB 8255 / S1).